Here is a 537-residue protein sequence, read N- to C-terminus: Chaperonin GroEL (537 aa).

Residues 31–34, 87–91, Gly415, and Asp495 contribute to the ATP site; these read TLGP and DGTTT.

Belongs to the chaperonin (HSP60) family. In terms of assembly, forms a cylinder of 14 subunits composed of two heptameric rings stacked back-to-back. Interacts with the co-chaperonin GroES.

The protein resides in the cytoplasm. It carries out the reaction ATP + H2O + a folded polypeptide = ADP + phosphate + an unfolded polypeptide.. Its function is as follows. Together with its co-chaperonin GroES, plays an essential role in assisting protein folding. The GroEL-GroES system forms a nano-cage that allows encapsulation of the non-native substrate proteins and provides a physical environment optimized to promote and accelerate protein folding. The chain is Chaperonin GroEL from Methanoregula boonei (strain DSM 21154 / JCM 14090 / 6A8).